The chain runs to 442 residues: 3-phosphoshikimate 1-carboxyvinyltransferase (442 aa).

3-phosphoshikimate-binding residues include Lys25, Ser26, and Arg30. Lys25 contributes to the phosphoenolpyruvate binding site. Residues Gly97 and Arg125 each coordinate phosphoenolpyruvate. Ser170, Gln172, Asp323, and Lys350 together coordinate 3-phosphoshikimate. Residue Gln172 participates in phosphoenolpyruvate binding. The active-site Proton acceptor is the Asp323. Phosphoenolpyruvate contacts are provided by Arg354 and Arg399.

The protein belongs to the EPSP synthase family. In terms of assembly, monomer.

The protein resides in the cytoplasm. The enzyme catalyses 3-phosphoshikimate + phosphoenolpyruvate = 5-O-(1-carboxyvinyl)-3-phosphoshikimate + phosphate. The protein operates within metabolic intermediate biosynthesis; chorismate biosynthesis; chorismate from D-erythrose 4-phosphate and phosphoenolpyruvate: step 6/7. Catalyzes the transfer of the enolpyruvyl moiety of phosphoenolpyruvate (PEP) to the 5-hydroxyl of shikimate-3-phosphate (S3P) to produce enolpyruvyl shikimate-3-phosphate and inorganic phosphate. This chain is 3-phosphoshikimate 1-carboxyvinyltransferase, found in Bartonella quintana (strain Toulouse) (Rochalimaea quintana).